The sequence spans 327 residues: Ribosomal RNA small subunit methyltransferase H (327 aa).

Residues 37–39 (GGY), D55, F82, D99, and Q106 each bind S-adenosyl-L-methionine. Residues 303–327 (IATRTDAPAQPVAPETLGLPQLEGF) are disordered.

The protein belongs to the methyltransferase superfamily. RsmH family.

The protein localises to the cytoplasm. It carries out the reaction cytidine(1402) in 16S rRNA + S-adenosyl-L-methionine = N(4)-methylcytidine(1402) in 16S rRNA + S-adenosyl-L-homocysteine + H(+). Its function is as follows. Specifically methylates the N4 position of cytidine in position 1402 (C1402) of 16S rRNA. In Jannaschia sp. (strain CCS1), this protein is Ribosomal RNA small subunit methyltransferase H.